Here is a 156-residue protein sequence, read N- to C-terminus: Small ribosomal subunit protein uS7 (156 aa).

This sequence belongs to the universal ribosomal protein uS7 family. As to quaternary structure, part of the 30S ribosomal subunit. Contacts proteins S9 and S11.

Functionally, one of the primary rRNA binding proteins, it binds directly to 16S rRNA where it nucleates assembly of the head domain of the 30S subunit. Is located at the subunit interface close to the decoding center, probably blocks exit of the E-site tRNA. This is Small ribosomal subunit protein uS7 from Pseudarthrobacter chlorophenolicus (strain ATCC 700700 / DSM 12829 / CIP 107037 / JCM 12360 / KCTC 9906 / NCIMB 13794 / A6) (Arthrobacter chlorophenolicus).